A 514-amino-acid chain; its full sequence is Maturase K (514 aa).

The protein belongs to the intron maturase 2 family. MatK subfamily.

The protein localises to the plastid. It localises to the chloroplast. In terms of biological role, usually encoded in the trnK tRNA gene intron. Probably assists in splicing its own and other chloroplast group II introns. The chain is Maturase K from Dioon spinulosum (Gum palm).